The sequence spans 369 residues: Peptide chain release factor 2 (369 aa).

Residue Gln-249 is modified to N5-methylglutamine.

Belongs to the prokaryotic/mitochondrial release factor family. Post-translationally, methylated by PrmC. Methylation increases the termination efficiency of RF2.

The protein resides in the cytoplasm. Peptide chain release factor 2 directs the termination of translation in response to the peptide chain termination codons UGA and UAA. This chain is Peptide chain release factor 2, found in Thermosipho africanus (strain TCF52B).